The primary structure comprises 94 residues: Small ubiquitin-related modifier 3 (94 aa).

Lys11 participates in a covalent cross-link: Glycyl lysine isopeptide (Lys-Gly) (interchain with G-Cter in SUMO). The Ubiquitin-like domain occupies 15–92 (DHINLKVAGQ…IDVFQQQTGG (78 aa)). A Glycyl lysine isopeptide (Gly-Lys) (interchain with K-? in acceptor proteins) cross-link involves residue Gly92. Positions 93-94 (SC) are excised as a propeptide.

Belongs to the ubiquitin family. SUMO subfamily. In terms of assembly, interacts with sae2 and ube2i. Covalently attached to a number of proteins. Polymeric chains can be formed through Lys-11 cross-linking. In terms of processing, cleavage of precursor form by a sentrin-specific protease is necessary for function.

It is found in the cytoplasm. The protein resides in the nucleus. The protein localises to the PML body. Functionally, ubiquitin-like protein which can be covalently attached to target lysines either as a monomer or as a lysine-linked polymer. Does not seem to be involved in protein degradation and may function as an antagonist of ubiquitin in the degradation process. Plays a role in a number of cellular processes such as nuclear transport, DNA replication and repair, mitosis and signal transduction. Covalent attachment to its substrates requires prior activation by the E1 complex sae1-sae2 and linkage to the E2 enzyme ube2i. The protein is Small ubiquitin-related modifier 3 (sumo3) of Danio rerio (Zebrafish).